Here is a 142-residue protein sequence, read N- to C-terminus: Large ribosomal subunit protein uL13 (142 aa).

This sequence belongs to the universal ribosomal protein uL13 family. In terms of assembly, part of the 50S ribosomal subunit.

Functionally, this protein is one of the early assembly proteins of the 50S ribosomal subunit, although it is not seen to bind rRNA by itself. It is important during the early stages of 50S assembly. This chain is Large ribosomal subunit protein uL13, found in Pseudomonas syringae pv. tomato (strain ATCC BAA-871 / DC3000).